A 558-amino-acid chain; its full sequence is Aspartate--tRNA ligase 2, cytoplasmic (558 aa).

A compositionally biased stretch (low complexity) spans 1 to 18 (MSSESEIPPLSSSTAAAE). A disordered region spans residues 1 to 57 (MSSESEIPPLSSSTAAAEESGEKTSKKAAKKEAAKLEKLRRRQEQEEATRRTASISL). N-acetylserine is present on S2. Residues 20–50 (SGEKTSKKAAKKEAAKLEKLRRRQEQEEATR) are compositionally biased toward basic and acidic residues. The OB DNA-binding region spans 110–195 (VLIRGRVHTN…QVEIQVRKVY (86 aa)). L-aspartate is bound at residue E286. The tract at residues 308-311 (QLHK) is aspartate. Position 330 (R330) interacts with L-aspartate. ATP-binding positions include 330-332 (RAE), 338-340 (RHL), and E481. Positions 481 and 484 each coordinate Mg(2+). 2 residues coordinate L-aspartate: S484 and R488. ATP is bound at residue 529 to 532 (GLER).

The protein belongs to the class-II aminoacyl-tRNA synthetase family. Type 2 subfamily.

Its subcellular location is the cytoplasm. It localises to the cytosol. It is found in the endoplasmic reticulum. The enzyme catalyses tRNA(Asp) + L-aspartate + ATP = L-aspartyl-tRNA(Asp) + AMP + diphosphate. In terms of biological role, catalyzes the specific attachment of an amino acid to its cognate tRNA in a 2 step reaction: the amino acid (AA) is first activated by ATP to form AA-AMP and then transferred to the acceptor end of the tRNA. Involved in the perception of beta-aminobutyric acid (BABA) and required for BABA priming effect in disease resistance. This is Aspartate--tRNA ligase 2, cytoplasmic from Arabidopsis thaliana (Mouse-ear cress).